A 371-amino-acid polypeptide reads, in one-letter code: E3 ubiquitin-protein ligase RHF1A (371 aa).

The RING-type; atypical zinc finger occupies 46-87 (CSICLEPFTLQDPSTVTSCKHEYHLQCIIEWSQRSKECPICW). 2 disordered regions span residues 199–254 (HQNS…SSLP) and 348–371 (EANS…GETC). Residues 200–225 (QNSNPCPSPGSMTPSPVSGHSSIPAD) show a composition bias toward polar residues. Residues 226 to 252 (SNNGSRISPGPSPSRSSQSPKSPEASS) show a composition bias toward low complexity.

As to quaternary structure, interacts with KRP6. Expressed in stems, flowers, green siliques, cauline leaves, seeds and roots.

It catalyses the reaction S-ubiquitinyl-[E2 ubiquitin-conjugating enzyme]-L-cysteine + [acceptor protein]-L-lysine = [E2 ubiquitin-conjugating enzyme]-L-cysteine + N(6)-ubiquitinyl-[acceptor protein]-L-lysine.. It participates in protein modification; protein ubiquitination. In terms of biological role, E3 ubiquitin-protein ligase involved in the positive regulation of the gametogenesis progression. Mediates the proteasomal degradation of KRP6, a cyclin-dependent kinase inhibitor which accumulates during meiosis and blocks the progression of subsequent mitoses during gametophyte development. Functions in association with RHF2A. Possesses E3 ubiquitin-protein ligase activity when associated with the E2 enzyme UBC8 in vitro. This is E3 ubiquitin-protein ligase RHF1A from Arabidopsis thaliana (Mouse-ear cress).